Consider the following 128-residue polypeptide: Iron-sulfur cluster insertion protein ErpA (128 aa).

Iron-sulfur cluster-binding residues include cysteine 56, cysteine 120, and cysteine 122.

This sequence belongs to the HesB/IscA family. In terms of assembly, homodimer. Iron-sulfur cluster is required as a cofactor.

Functionally, required for insertion of 4Fe-4S clusters for at least IspG. The sequence is that of Iron-sulfur cluster insertion protein ErpA from Xylella fastidiosa (strain M12).